An 83-amino-acid chain; its full sequence is Large ribosomal subunit protein eL31 (83 aa).

This sequence belongs to the eukaryotic ribosomal protein eL31 family.

The polypeptide is Large ribosomal subunit protein eL31 (Methanococcus aeolicus (strain ATCC BAA-1280 / DSM 17508 / OCM 812 / Nankai-3)).